The primary structure comprises 166 residues: Signal peptidase complex catalytic subunit SEC11 (166 aa).

At 1–9 the chain is on the cytoplasmic side; sequence MNIRQQLTQ. The helical; Signal-anchor for type II membrane protein transmembrane segment at 10–30 threads the bilayer; it reads LLTLGYVFASAFMLWKTLSVV. Residues 31-166 are Lumenal-facing; sequence ANLHSPIVVV…LGLSSLFSNE (136 aa). Active-site charge relay system residues include Ser44, His83, and Asp108. The tract at residues 152 to 163 is C-terminal short (CTS) helix; the sequence is GLLGLLGLSSLF.

Belongs to the peptidase S26B family. As to quaternary structure, component of the signal peptidase complex (SPC) composed of a catalytic subunit SEC11 and three accessory subunits SPC1, SPC2 and SPC3. The complex induces a local thinning of the ER membrane which is used to measure the length of the signal peptide (SP) h-region of protein substrates. This ensures the selectivity of the complex towards h-regions shorter than 18-20 amino acids. SPC associates with the translocon complex.

The protein resides in the endoplasmic reticulum membrane. It carries out the reaction Cleavage of hydrophobic, N-terminal signal or leader sequences from secreted and periplasmic proteins.. Functionally, catalytic component of the signal peptidase complex (SPC) which catalyzes the cleavage of N-terminal signal sequences from nascent proteins as they are translocated into the lumen of the endoplasmic reticulum. Specifically cleaves N-terminal signal peptides that contain a hydrophobic alpha-helix (h-region) shorter than 18-20 amino acids. This is Signal peptidase complex catalytic subunit SEC11 (SEC11) from Lodderomyces elongisporus (strain ATCC 11503 / CBS 2605 / JCM 1781 / NBRC 1676 / NRRL YB-4239) (Yeast).